A 161-amino-acid polypeptide reads, in one-letter code: Carboxysome assembly protein CcmN (161 aa).

Positions 111-140 (LLSAETPPTTATVSSSEPAGRSPQSSAIAH) are disordered. Residues 116–137 (TPPTTATVSSSEPAGRSPQSSA) show a composition bias toward polar residues. Positions 144-161 (VYGKEQFLRMRQSMFPDR) match the Encapsulation peptide motif.

The protein belongs to the CcmN family. Interacts with CcmM via the N-terminus of CcmN. Interacts with CcmK2 via the 18 C-terminal residues.

The protein localises to the carboxysome. Its function is as follows. Required for carboxysome formation; the N-terminus interacts with CcmM which itself binds RuBisCO (ribulose bisphosphate carboxylase, rbcL-rbcS), while the C-terminal 18 residues interact with carboxysome shell protein CcmK2. Required for growth in normal air. Functionally, beta-carboxysome assembly initiates when soluble RuBisCO is condensed into a liquid matrix in a pre-carboxysome by the RbcS-like domains of probably both CcmM58 and CcmM35. CcmN interacts with the N-terminus of CcmM58, and then recruits the CcmK2 major shell protein via CcmN's encapsulation peptide. Shell formation requires CcmK proteins and CcmO. CcmL caps the otherwise elongated carboxysome. Once fully encapsulated carboxysomes are formed, they migrate within the cell probably via interactions with the cytoskeleton. The chain is Carboxysome assembly protein CcmN from Synechococcus elongatus (strain ATCC 33912 / PCC 7942 / FACHB-805) (Anacystis nidulans R2).